The primary structure comprises 517 residues: MIFLAPFEFLDPLRHALPLTCTGLIIIFAFYLSRHHSPKPAPNIPIHSYDREEYFRRGYELVQEGQKKHPSCFQLRTATGWKILVPIRFVEELRKNPSLSFARGNDKDAFIEYPGFEAMEAACHDDYFMQEVVRVKLTQTLNLLYSSVIDESAVAMSEVLGEDKIWRTLRIKDDINHIVARVTSRVFLGFPLCRNQKWLDIVVNHTKAVFMAQKRMRQTPPALRPLIHYFLPETKLLRQHLHAARTLISPELAKRRAAVEEALRHGKIPKESANAISWMVEVSQAQGRKIDVAVHVVSLSMTAIQTTSEVMTNCILQLCETPSIVDDLRAEIIFLLKEGGWTKYTLYKMRLLDSFIREVMRHHDFLRVTSWRGCTEDVVLSDGTVLPKGSCIYFDDSKVVDPEHYPDPEKFDPMRSFKKREQPGQEDRHQFVSLQTDHMAFGYGIHACPGRFFANMELKVMLCNFLLKYDVRLVPGEKRPVDILFEVQRMVPPDVRVQIKVRDQEPEVDLYSPISST.

Residues 16-33 (ALPLTCTGLIIIFAFYLS) traverse the membrane as a helical segment. A glycan (N-linked (GlcNAc...) asparagine) is linked at Asn204. Cys448 contributes to the heme binding site.

Belongs to the cytochrome P450 family. Requires heme as cofactor.

It is found in the membrane. Its pathway is mycotoxin biosynthesis. Cytochrome P450 monooxygenase; part of the gene cluster that mediates the biosynthesis of the diterpene glucoside brassicicene C. In the first step of the brassicicene C biosynthesis, the bifunctional diterpene synthase bsc8 that possesses both prenyl transferase and terpene cyclase activity, converts isopentenyl diphosphate and dimethylallyl diphosphate into geranylgeranyl diphosphate (GGDP) that is further converted into fusicocca-2,10(14)-diene, the first precursor for brassicicene C. Fusicocca-2,10(14)-diene is then substrate of cytochrome P450 monooxygenase bsc1 for hydroxylation at the C-8 position. Oxidation at C-16 position to aldehyde is then catalyzed by the cytochrome P450 monooyxygenase bsc7, yielding fusicocca-2,10(14)-diene-8-beta,16-diol. Follows the isomerization of the double bond and reduction of aldehyde to alcohol catalyzed by the short-chain dehydrogenase/reductase bsc3 to yield the diol compound fusicocca-1,10(14)-diene-8 beta,16-diol. The next step is the oxidation at the C-3 position of fusicocca-2,10(14)-diene-8-beta,16-diol catalyzed by the alpha-ketoglutarate dependent dioxygenase bsc9, to produce a triol compound. Methylation of the hydroxy group at position 16 is performed by the methyltransferase bsc6. 16-O-methylation is followed by oxidation at the C-13 position to ketone and an alkyl shift of the methyl group leads to brassicicene C. Although the probable acetyltransferase bsc4 is included in the gene cluster, no acetylation reactions are necessary for brassicicene C biosynthesis. However, the fact that brassicicene E, which is a structurally related compound having an acetoxy group at position 12, was previously isolated from another strain of A.brassicicola suggests that the ATCC 96836 strain might also produce a small amount of brassicicene E. The chain is Cytochrome P450 monooxygenase bsc11 from Alternaria brassicicola (Dark leaf spot agent).